Reading from the N-terminus, the 438-residue chain is Trigger factor (438 aa).

One can recognise a PPIase FKBP-type domain in the interval 160–245 (DDKVTIDFVG…VKKIQQAELP (86 aa)).

It belongs to the FKBP-type PPIase family. Tig subfamily.

It is found in the cytoplasm. It catalyses the reaction [protein]-peptidylproline (omega=180) = [protein]-peptidylproline (omega=0). Its function is as follows. Involved in protein export. Acts as a chaperone by maintaining the newly synthesized protein in an open conformation. Functions as a peptidyl-prolyl cis-trans isomerase. The chain is Trigger factor from Francisella tularensis subsp. mediasiatica (strain FSC147).